The primary structure comprises 414 residues: Voltage-gated ClC-type chloride channel ClcB (414 aa).

11 helical membrane passes run 5–25 (LVISIMLGMVSALIVWLFHQA), 54–74 (ALTPALGGLAAGLLLWAYQRY), 116–136 (SAIGREGAMVLLAALFASVFA), 147–167 (LWVACGAAAGMASAYHAPLAG), 169–189 (LFIAEILFGTLMLASLGPVVI), 220–240 (VQYFLMALLGLMAGFSGPLFL), 255–275 (LLPPLQLALGGIIVGLLSLIF), 292–312 (TPPGVLLIGGILICKLLAVLA), 327–347 (LFVGAALGMLCGQIFSLWPVL), 353–373 (LLMALTGMATLLAATTHAPIM), and 381–401 (MTGEYTLLPGLLLSCVIATTI).

Belongs to the chloride channel (TC 2.A.49) family. ClcB subfamily.

The protein resides in the cell inner membrane. Its function is as follows. Probably acts as an electrical shunt for an outwardly-directed proton pump that is linked to amino acid decarboxylation, as part of the extreme acid resistance (XAR) response. The sequence is that of Voltage-gated ClC-type chloride channel ClcB from Yersinia pseudotuberculosis serotype O:1b (strain IP 31758).